The primary structure comprises 149 residues: D-aminoacyl-tRNA deacylase (149 aa).

The short motif at 137–138 is the Gly-cisPro motif, important for rejection of L-amino acids element; that stretch reads GP.

Belongs to the DTD family. Homodimer.

It is found in the cytoplasm. It carries out the reaction glycyl-tRNA(Ala) + H2O = tRNA(Ala) + glycine + H(+). The enzyme catalyses a D-aminoacyl-tRNA + H2O = a tRNA + a D-alpha-amino acid + H(+). Functionally, an aminoacyl-tRNA editing enzyme that deacylates mischarged D-aminoacyl-tRNAs. Also deacylates mischarged glycyl-tRNA(Ala), protecting cells against glycine mischarging by AlaRS. Acts via tRNA-based rather than protein-based catalysis; rejects L-amino acids rather than detecting D-amino acids in the active site. By recycling D-aminoacyl-tRNA to D-amino acids and free tRNA molecules, this enzyme counteracts the toxicity associated with the formation of D-aminoacyl-tRNA entities in vivo and helps enforce protein L-homochirality. The protein is D-aminoacyl-tRNA deacylase of Clostridium perfringens (strain ATCC 13124 / DSM 756 / JCM 1290 / NCIMB 6125 / NCTC 8237 / Type A).